Here is a 517-residue protein sequence, read N- to C-terminus: Amidophosphoribosyltransferase (517 aa).

The residue at position 1 (Met1) is an N-acetylmethionine. A propeptide spanning residues 1–11 (MELEESGIREE) is cleaved from the precursor. The Nucleophile role is filled by Cys12. One can recognise a Glutamine amidotransferase type-2 domain in the interval 12–261 (CGVFGCIASG…PGEIVEISRH (250 aa)). Residue Cys280 coordinates [4Fe-4S] cluster. The Mg(2+) site is built by Ser327, Asp389, and Asp390. Cys426, Cys503, and Cys506 together coordinate [4Fe-4S] cluster.

The protein in the C-terminal section; belongs to the purine/pyrimidine phosphoribosyltransferase family. As to quaternary structure, homotetramer. It depends on Mg(2+) as a cofactor. Requires [4Fe-4S] cluster as cofactor. In terms of tissue distribution, expressed at a high level in brain, heart, liver and stomach.

The catalysed reaction is 5-phospho-beta-D-ribosylamine + L-glutamate + diphosphate = 5-phospho-alpha-D-ribose 1-diphosphate + L-glutamine + H2O. It functions in the pathway purine metabolism; IMP biosynthesis via de novo pathway; N(1)-(5-phospho-D-ribosyl)glycinamide from 5-phospho-alpha-D-ribose 1-diphosphate: step 1/2. With respect to regulation, activated by the substrate 5-phospho-alpha-D-ribosyl-1-pyrophosphate and inhibited by the purine ribonucleotides, the end products of purine biosynthesis. Functionally, catalyzes the formation of phosphoribosylamine from phosphoribosylpyrophosphate (PRPP) and glutamine. The polypeptide is Amidophosphoribosyltransferase (Ppat) (Rattus norvegicus (Rat)).